The sequence spans 359 residues: Membrane-bound lytic murein transglycosylase C (359 aa).

The signal sequence occupies residues 1-16 (MKKYLALALIAPLLIS). Residue C17 is the site of N-palmitoyl cysteine attachment. C17 is lipidated: S-diacylglycerol cysteine.

It belongs to the transglycosylase Slt family.

Its subcellular location is the cell outer membrane. It carries out the reaction Exolytic cleavage of the (1-&gt;4)-beta-glycosidic linkage between N-acetylmuramic acid (MurNAc) and N-acetylglucosamine (GlcNAc) residues in peptidoglycan, from either the reducing or the non-reducing ends of the peptidoglycan chains, with concomitant formation of a 1,6-anhydrobond in the MurNAc residue.. In terms of biological role, murein-degrading enzyme. May play a role in recycling of muropeptides during cell elongation and/or cell division. The polypeptide is Membrane-bound lytic murein transglycosylase C (Escherichia coli O127:H6 (strain E2348/69 / EPEC)).